Consider the following 260-residue polypeptide: Hemin import ATP-binding protein HmuV (260 aa).

The ABC transporter domain maps to 6–242; it reads LHADNLHYRA…VQLRACYQAD (237 aa). 38 to 45 contributes to the ATP binding site; it reads GPNGAGKS.

The protein belongs to the ABC transporter superfamily. Heme (hemin) importer (TC 3.A.1.14.5) family. As to quaternary structure, the complex is composed of two ATP-binding proteins (HmuV), two transmembrane proteins (HmuU) and a solute-binding protein (HmuT).

The protein resides in the cell inner membrane. Part of the ABC transporter complex HmuTUV involved in hemin import. Responsible for energy coupling to the transport system. The sequence is that of Hemin import ATP-binding protein HmuV from Sodalis glossinidius (strain morsitans).